Consider the following 193-residue polypeptide: Oligoribonuclease (193 aa).

Residues Phe20–Leu183 form the Exonuclease domain. Residue Tyr141 is part of the active site.

This sequence belongs to the oligoribonuclease family.

The protein resides in the cytoplasm. In terms of biological role, 3'-to-5' exoribonuclease specific for small oligoribonucleotides. This Paracidovorax citrulli (strain AAC00-1) (Acidovorax citrulli) protein is Oligoribonuclease.